We begin with the raw amino-acid sequence, 415 residues long: uncharacterized protein (415 aa).

One can recognise a TRAM domain in the interval 1–55 (MSTGTVTIDRLGAQGDGVARTEAGPVFAPFTLPGETVSLAVNKANGTLISLKEAS). [4Fe-4S] cluster-binding residues include Cys-63, Cys-75, Cys-78, and Cys-152. Gln-252, Phe-279, Glu-299, and Asp-347 together coordinate S-adenosyl-L-methionine. Cys-373 serves as the catalytic Nucleophile.

This sequence belongs to the class I-like SAM-binding methyltransferase superfamily. RNA M5U methyltransferase family.

This is an uncharacterized protein from Rhizobium meliloti (strain 1021) (Ensifer meliloti).